We begin with the raw amino-acid sequence, 297 residues long: 3-methyl-2-oxobutanoate hydroxymethyltransferase (297 aa).

Over residues 1–12 the composition is skewed to polar residues; sequence MSEQISEQSEQN. Positions 1 to 36 are disordered; sequence MSEQISEQSEQNVYGACPPVPAGESSPSAASAPRTK. The span at 22–33 shows a compositional bias: low complexity; it reads AGESSPSAASAP. Residues Asp-78 and Asp-117 each contribute to the Mg(2+) site. Residues 78–79, Asp-117, and Lys-147 contribute to the 3-methyl-2-oxobutanoate site; that span reads DS. Position 149 (Glu-149) interacts with Mg(2+). Glu-215 serves as the catalytic Proton acceptor.

It belongs to the PanB family. In terms of assembly, homodecamer; pentamer of dimers. Requires Mg(2+) as cofactor.

Its subcellular location is the cytoplasm. The enzyme catalyses 3-methyl-2-oxobutanoate + (6R)-5,10-methylene-5,6,7,8-tetrahydrofolate + H2O = 2-dehydropantoate + (6S)-5,6,7,8-tetrahydrofolate. Its pathway is cofactor biosynthesis; (R)-pantothenate biosynthesis; (R)-pantoate from 3-methyl-2-oxobutanoate: step 1/2. Its function is as follows. Catalyzes the reversible reaction in which hydroxymethyl group from 5,10-methylenetetrahydrofolate is transferred onto alpha-ketoisovalerate to form ketopantoate. The chain is 3-methyl-2-oxobutanoate hydroxymethyltransferase from Mycobacterium ulcerans (strain Agy99).